The following is a 200-amino-acid chain: dITP/XTP pyrophosphatase (200 aa).

19–24 (TSNAGK) lines the substrate pocket. Glu-49 and Asp-78 together coordinate Mg(2+). Catalysis depends on Asp-78, which acts as the Proton acceptor. Substrate-binding positions include Ser-79, 158-161 (FGYD), Lys-181, and 186-187 (HR).

This sequence belongs to the HAM1 NTPase family. As to quaternary structure, homodimer. It depends on Mg(2+) as a cofactor.

It carries out the reaction XTP + H2O = XMP + diphosphate + H(+). It catalyses the reaction dITP + H2O = dIMP + diphosphate + H(+). The catalysed reaction is ITP + H2O = IMP + diphosphate + H(+). Pyrophosphatase that catalyzes the hydrolysis of nucleoside triphosphates to their monophosphate derivatives, with a high preference for the non-canonical purine nucleotides XTP (xanthosine triphosphate), dITP (deoxyinosine triphosphate) and ITP. Seems to function as a house-cleaning enzyme that removes non-canonical purine nucleotides from the nucleotide pool, thus preventing their incorporation into DNA/RNA and avoiding chromosomal lesions. The protein is dITP/XTP pyrophosphatase of Deinococcus radiodurans (strain ATCC 13939 / DSM 20539 / JCM 16871 / CCUG 27074 / LMG 4051 / NBRC 15346 / NCIMB 9279 / VKM B-1422 / R1).